Here is a 425-residue protein sequence, read N- to C-terminus: SWI5-dependent HO expression protein 3 (425 aa).

The disordered stretch occupies residues 24–45; the sequence is NLESSPTKDRNTSSQNASSSRV. The segment covering 35–45 has biased composition (polar residues); sequence TSSQNASSSRV. Residues 68–197 are a coiled coil; the sequence is QNLLSKLELA…LELSNQNLNY (130 aa). Residues 322-425 form a disordered region; the sequence is RKTPNTNDSS…NSMVVHGAQS (104 aa). Residues 326–338 show a composition bias toward low complexity; that stretch reads NTNDSSSNGNSSN. Phosphoserine is present on Ser343. Polar residues-rich tracts occupy residues 345–358 and 382–397; these read YTASPLLSSGSIPK and KTNVTHNNDPSTSPTI. Ser394 is modified (phosphoserine).

The protein belongs to the SHE3 family. As to quaternary structure, interacts with SHE2 and MYO4.

The protein resides in the endoplasmic reticulum membrane. Functionally, RNA-binding protein that binds specific mRNAs including the ASH1 mRNA, coding for a repressor of the HO endonuclease. Part of the mRNA localization machinery that restricts accumulation of certain proteins to the bud and in the daughter cell. Required for the delivery of cortical endoplasmic reticulum into the emerging bud. The polypeptide is SWI5-dependent HO expression protein 3 (SHE3) (Saccharomyces cerevisiae (strain ATCC 204508 / S288c) (Baker's yeast)).